A 213-amino-acid chain; its full sequence is Adenylate kinase (213 aa).

10 to 15 (GAGKGT) is an ATP binding site. The segment at 30-59 (STGDMFRAAMANQTEMGILAKSYIDKGDLV) is NMP. AMP is bound by residues Thr31, Arg36, 57 to 59 (DLV), 86 to 89 (GYPR), and Gln93. Residues 127–160 (GRIIHKETGETFHKVFNPPVGDYKEEDFYQREDD) form an LID region. ATP is bound by residues Arg128 and 137 to 138 (TF). AMP-binding residues include Arg157 and Arg168. Gln196 is a binding site for ATP.

This sequence belongs to the adenylate kinase family. As to quaternary structure, monomer.

It is found in the cytoplasm. It catalyses the reaction AMP + ATP = 2 ADP. It functions in the pathway purine metabolism; AMP biosynthesis via salvage pathway; AMP from ADP: step 1/1. Its function is as follows. Catalyzes the reversible transfer of the terminal phosphate group between ATP and AMP. Plays an important role in cellular energy homeostasis and in adenine nucleotide metabolism. The sequence is that of Adenylate kinase from Streptococcus suis (strain 98HAH33).